We begin with the raw amino-acid sequence, 121 residues long: NLIQFGNMISAMTGKSSLAYASYGCYCGWGGKGQPKDDTDRCCFVHDCCYGKADKCSPKMILYSYKFHNGNIVCGDKNACKKKVCECDRVAAICFAASKHSYNKNLWRYPSSKCTGTAEKC.

7 disulfides stabilise this stretch: cysteine 25–cysteine 114, cysteine 27–cysteine 43, cysteine 42–cysteine 94, cysteine 48–cysteine 121, cysteine 49–cysteine 87, cysteine 56–cysteine 80, and cysteine 74–cysteine 85. Ca(2+) contacts are provided by tyrosine 26, glycine 28, and glycine 30. Histidine 46 is an active-site residue. Aspartate 47 lines the Ca(2+) pocket. Aspartate 88 is an active-site residue.

It belongs to the phospholipase A2 family. Group II subfamily. D49 sub-subfamily. In terms of assembly, monomer. Ca(2+) serves as cofactor. Expressed by the venom gland.

It is found in the secreted. The enzyme catalyses a 1,2-diacyl-sn-glycero-3-phosphocholine + H2O = a 1-acyl-sn-glycero-3-phosphocholine + a fatty acid + H(+). Its function is as follows. Snake venom phospholipase A2 (PLA2) that shows anticoagulant activity and presynaptic neurotoxicity. Acts as an anticoagulant toxin by inhibiting prothrombinase complex formation. Shows about 50% of the prothrombinase complex inhibition compared to CM-IV of N.nigricollis venom. Acts as a neurotoxin by inhibiting neuromuscular transmission by blocking acetylcholine release from the nerve termini. PLA2 catalyzes the calcium-dependent hydrolysis of the 2-acyl groups in 3-sn-phosphoglycerides. The chain is Basic phospholipase A2 caudoxin from Bitis caudalis (Horned adder).